Reading from the N-terminus, the 329-residue chain is Alternative oxidase, mitochondrial (329 aa).

A helical transmembrane segment spans residues valine 115 to methionine 135. Residues glutamate 123, glutamate 162, and histidine 165 each contribute to the Fe cation site. A helical transmembrane segment spans residues valine 181–serine 201. Fe cation is bound by residues glutamate 213, glutamate 266, and histidine 269. Residues glutamate 300–valine 329 are disordered.

It belongs to the alternative oxidase family. As to quaternary structure, homodimer; disulfide-linked. The cofactor is Fe cation.

The protein resides in the mitochondrion inner membrane. In terms of biological role, catalyzes cyanide-resistant oxygen consumption. May increase respiration when the cytochrome respiratory pathway is restricted, or in response to low temperatures. In Trypanosoma brucei brucei, this protein is Alternative oxidase, mitochondrial (AOX).